A 388-amino-acid polypeptide reads, in one-letter code: Na(+)/H(+) antiporter NhaA (388 aa).

The Cytoplasmic segment spans residues 1 to 11; it reads MKHLHRFFSSD. The helical transmembrane segment at 12–31 threads the bilayer; the sequence is ASGGIILIIAAILAMIMANS. The Periplasmic portion of the chain corresponds to 32–58; that stretch reads GATSGWYHDFLETPVQLRVGSLEINKN. The important for dimerization stretch occupies residues 45–58; sequence PVQLRVGSLEINKN. Residues 59-80 form a helical membrane-spanning segment; sequence MLLWINDALMAVFFLLVGLEVK. At 81–96 the chain is on the cytoplasmic side; the sequence is RELMQGSLASLRQAAF. A helical transmembrane segment spans residues 97-116; the sequence is PVIAAIGGMIVPALLYLAFN. Topologically, residues 117–122 are periplasmic; that stretch reads YADPIT. A helical membrane pass occupies residues 123–130; sequence REGWAIPA. Residues 131–154 are Cytoplasmic-facing; that stretch reads ATDIAFALGVLALLGSRVPLALKI. The chain crosses the membrane as a helical span at residues 155–176; that stretch reads FLMALAIIDDLGAIIIIALFYT. The Periplasmic segment spans residues 177 to 180; the sequence is NDLS. Residues 181–200 traverse the membrane as a helical segment; that stretch reads MASLGVAAVAIAVLAVLNLC. The Cytoplasmic segment spans residues 201 to 204; it reads GARR. Residues 205–222 form a helical membrane-spanning segment; it reads TGVYILVGVVLWTAVLKS. Residue Gly223 is a topological domain, periplasmic. Residues 224–236 form a helical membrane-spanning segment; sequence VHATLAGVIVGFF. The Cytoplasmic portion of the chain corresponds to 237–253; it reads IPLKEKHGRSPAKRLEH. A helical transmembrane segment spans residues 254-272; sequence VLHPWVAYLILPLFAFANA. Over 273-286 the chain is Periplasmic; it reads GVSLQGVTLDGLTS. The chain crosses the membrane as a helical span at residues 287–310; the sequence is ILPLGIIAGLLIGKPLGISLFCWL. At 311 to 339 the chain is on the cytoplasmic side; the sequence is ALRLKLAHLPEGTTYQQIMVVGILCGIGF. A helical transmembrane segment spans residues 340 to 350; sequence TMSIFIASLAF. Over 351–357 the chain is Periplasmic; sequence GSVDPEL. The helical transmembrane segment at 358 to 380 threads the bilayer; sequence INWAKLGILVGSISSAVIGYSWL. The Cytoplasmic segment spans residues 381–388; that stretch reads RVRLRPSV.

The protein belongs to the NhaA Na(+)/H(+) (TC 2.A.33) antiporter family. As to quaternary structure, monomer. Homodimer. Under routine stress conditions, the monomeric form is fully functional. However, the dimeric form is much more efficient in conferring growth resistance under extreme stress conditions.

It localises to the cell inner membrane. The catalysed reaction is Na(+)(in) + 2 H(+)(out) = Na(+)(out) + 2 H(+)(in). The enzyme catalyses Li(+)(in) + 2 H(+)(out) = Li(+)(out) + 2 H(+)(in). With respect to regulation, activity is regulated by pH. Active at alkaline pH. Activity is strongly down-regulated below pH 6.5 and a dramatic increase in activity is observed upon increase of the pH from 6.5 to 8.5. In terms of biological role, na(+)/H(+) antiporter that extrudes sodium in exchange for external protons. Plays an important role in the regulation of intracellular pH, cellular Na(+) content and cell volume. Catalyzes the exchange of 2 H(+) per Na(+). This stoichiometry applies at both neutral and alkaline pH values. In addition, can also transport lithium and is involved in lithium detoxification. Binding of the Li(+) and H(+) ligands to NhaA is coupled and antagonistic. The protein is Na(+)/H(+) antiporter NhaA of Escherichia coli (strain K12).